Here is a 163-residue protein sequence, read N- to C-terminus: Pheromone-binding protein 1 (163 aa).

The first 21 residues, 1 to 21 (MLGKISLLLLPVFVAINLVHS), serve as a signal peptide directing secretion. 3 disulfide bridges follow: cysteine 40–cysteine 75, cysteine 71–cysteine 129, and cysteine 118–cysteine 138.

It belongs to the PBP/GOBP family. Antenna.

Its function is as follows. This major soluble protein in olfactory sensilla of male moths might serve to solubilize the extremely hydrophobic pheromone molecules and to transport pheromone through the aqueous lymph to receptors located on olfactory cilia. This chain is Pheromone-binding protein 1, found in Antheraea pernyi (Chinese oak silk moth).